We begin with the raw amino-acid sequence, 332 residues long: Very-long-chain 3-oxoacyl-CoA reductase (332 aa).

A helical transmembrane segment spans residues 15 to 35 (GQWALAGIGALYVATRVGAFL). Positions 60, 115, 123, 142, 177, 209, 213, 242, and 244 each coordinate NADP(+). Catalysis depends on Y209, which acts as the Proton donor. K213 (lowers pKa of active site Tyr) is an active-site residue.

The protein belongs to the short-chain dehydrogenases/reductases (SDR) family.

It localises to the endoplasmic reticulum membrane. It carries out the reaction a very-long-chain (3R)-3-hydroxyacyl-CoA + NADP(+) = a very-long-chain 3-oxoacyl-CoA + NADPH + H(+). It participates in lipid metabolism; fatty acid biosynthesis. Functionally, component of the microsomal membrane bound fatty acid elongation system, which produces the 26-carbon very long-chain fatty acids (VLCFA) from palmitate. Catalyzes the reduction of the 3-ketoacyl-CoA intermediate that is formed in each cycle of fatty acid elongation. VLCFAs serve as precursors for ceramide and sphingolipids. The sequence is that of Very-long-chain 3-oxoacyl-CoA reductase from Neurospora crassa (strain ATCC 24698 / 74-OR23-1A / CBS 708.71 / DSM 1257 / FGSC 987).